The sequence spans 201 residues: Troponin I (201 aa).

Ala1 is modified (N-acetylalanine). The span at 1–33 (ADKAKAAEEAKKKQDDIDRKKAEVRKRLEEQSL) shows a compositional bias: basic and acidic residues. Residues 1–45 (ADKAKAAEEAKKKQDDIDRKKAEVRKRLEEQSLKKQKKGFMTPER) are disordered. Positions 108–117 (IESDKYDVEL) are troponin T-interaction. An actin-binding region spans residues 135–148 (DLRGKFIKPTLKKV). N6,N6,N6-trimethyllysine occurs at positions 142 and 146. The tract at residues 182-201 (EDDKGATEGDGPAAEEVAAE) is disordered.

This sequence belongs to the troponin I family.

Functionally, troponin I is the actomyosin ATPase inhibitory subunit present in the thin filament regulatory complex. The sequence is that of Troponin I from Astacus leptodactylus (Turkish narrow-clawed crayfish).